Here is a 1118-residue protein sequence, read N- to C-terminus: Ubiquitin carboxyl-terminal hydrolase 8 (1118 aa).

Residues 33 to 116 enclose the MIT domain; the sequence is TKSYVHSALK…ESLKLRYEEA (84 aa). Basic and acidic residues-rich tracts occupy residues 120-146 and 158-177; these read KKLE…REDG and LDSK…KCET. The tract at residues 120-177 is disordered; that stretch reads KKLEEKDRQEEAQRLQQKRQETGREDGGTLAKGSLENVLDSKDKTQKSNGEKNEKCET. The residue at position 160 (serine 160) is a Phosphoserine. The 119-residue stretch at 195 to 313 folds into the Rhodanese domain; the sequence is KNISLIIMDA…WLLCYPQYTT (119 aa). Phosphoserine occurs at positions 392 and 400. The interval 402–447 is disordered; that stretch reads KNVPQIDRTKKPAVKLPEEHRIKSESTNHEQQSPQSGKVIPDRSTK. The short motif at 405–413 is the SH3-binding element; it reads PQIDRTKKP. Basic and acidic residues predominate over residues 417 to 429; the sequence is LPEEHRIKSESTN. Serine 452 is subject to Phosphoserine. Positions 475-573 are enriched in basic and acidic residues; sequence KNKQEKELRE…AKKSVEDRGK (99 aa). 2 disordered regions span residues 475–648 and 679–746; these read KNKQ…GRIV and YPPE…ENKP. At threonine 577 the chain carries Phosphothreonine. Basic and acidic residues predominate over residues 618–645; it reads TFREDTDDTERNKAQREPLTRARSEEMG. Polar residues predominate over residues 716–726; the sequence is SYSSPDITQAI. Phosphoserine is present on residues serine 718 and serine 719. Positions 777 to 1109 constitute a USP domain; it reads TGLRNLGNTC…AAYILFYTSL (333 aa). Residue cysteine 786 is the Nucleophile of the active site. At threonine 945 the chain carries Phosphothreonine. Histidine 1067 serves as the catalytic Proton acceptor.

The protein belongs to the peptidase C19 family. Forms a ternary complex with RNF128 and OTUB1. Interacts (via C-terminal UCH catalytic domain) with OTUB1 isoform 1. Interacts with STAM2 (via SH3 domain). Interacts with DNAJB3, EGFR, EPS15, RASGRF1, RNF41, YWHAE, YWHAG and YWHAZ. Interacts with NBR1, RASGRF1, RNF41 and IST1. Associates with the ESCRT-0 complex and with microtubules. Interacts with BIRC6/bruce and KIF23/MKLP1. In terms of assembly, (Microbial infection) Interacts with Zika virus non-structural protein 1. Post-translationally, phosphorylation of Ser-718 is essential for interaction with YWHAE and for cytosol localization. Undergoes dephosphorylation at Ser-718 in the M phase. Tyrosine-phosphorylated in its N-terminal half in an EGFR-dependent manner. In terms of processing, ubiquitinated. Inactive form is mostly monoubiquitinated, but polyubiquitination happens too. Ubiquitination is increased in EGF-stimulated cells. Ubiquitination of active form is undetectable, suggesting a possibility that USP8 deubiquitinates itself, thereby regulating its own function.

It is found in the cytoplasm. It localises to the nucleus. The protein localises to the endosome membrane. Its subcellular location is the cell membrane. The catalysed reaction is Thiol-dependent hydrolysis of ester, thioester, amide, peptide and isopeptide bonds formed by the C-terminal Gly of ubiquitin (a 76-residue protein attached to proteins as an intracellular targeting signal).. Functionally, hydrolase that can remove conjugated ubiquitin from proteins and therefore plays an important regulatory role at the level of protein turnover by preventing degradation. Converts both 'Lys-48' an 'Lys-63'-linked ubiquitin chains. Catalytic activity is enhanced in the M phase. Involved in cell proliferation. Required to enter into S phase in response to serum stimulation. May regulate T-cell anergy mediated by RNF128 via the formation of a complex containing RNF128 and OTUB1. Probably regulates the stability of STAM2 and RASGRF1. Regulates endosomal ubiquitin dynamics, cargo sorting, membrane traffic at early endosomes, and maintenance of ESCRT-0 stability. The level of protein ubiquitination on endosomes is essential for maintaining the morphology of the organelle. Deubiquitinates EPS15 and controls tyrosine kinase stability. Removes conjugated ubiquitin from EGFR thus regulating EGFR degradation and downstream MAPK signaling. Involved in acrosome biogenesis through interaction with the spermatid ESCRT-0 complex and microtubules. Deubiquitinates BIRC6/bruce and KIF23/MKLP1. Deubiquitinates BACE1 which inhibits BACE1 lysosomal degradation and modulates BACE-mediated APP cleavage and amyloid-beta formation. This Homo sapiens (Human) protein is Ubiquitin carboxyl-terminal hydrolase 8.